The sequence spans 200 residues: Somatotropin (200 aa).

Residues 1–22 (MARVLVLLSVVVASLLFSQGAT) form the signal peptide. H38 is a Zn(2+) binding site. An intrachain disulfide couples C71 to C173. E182 is a binding site for Zn(2+). C190 and C198 form a disulfide bridge.

This sequence belongs to the somatotropin/prolactin family.

The protein resides in the secreted. In terms of biological role, growth hormone plays an important role in growth control and is involved in the regulation of several anabolic processes. Implicated as an osmoregulatory substance important for seawater adaptation. The sequence is that of Somatotropin (gh) from Ictalurus punctatus (Channel catfish).